A 325-amino-acid chain; its full sequence is Lipoyl synthase (325 aa).

[4Fe-4S] cluster is bound by residues Cys-72, Cys-77, Cys-83, Cys-98, Cys-102, Cys-105, and Ser-312. The Radical SAM core domain occupies 84–301 (FSSGTATFMI…AEEGMKMGFK (218 aa)).

The protein belongs to the radical SAM superfamily. Lipoyl synthase family. It depends on [4Fe-4S] cluster as a cofactor.

Its subcellular location is the cytoplasm. It catalyses the reaction [[Fe-S] cluster scaffold protein carrying a second [4Fe-4S](2+) cluster] + N(6)-octanoyl-L-lysyl-[protein] + 2 oxidized [2Fe-2S]-[ferredoxin] + 2 S-adenosyl-L-methionine + 4 H(+) = [[Fe-S] cluster scaffold protein] + N(6)-[(R)-dihydrolipoyl]-L-lysyl-[protein] + 4 Fe(3+) + 2 hydrogen sulfide + 2 5'-deoxyadenosine + 2 L-methionine + 2 reduced [2Fe-2S]-[ferredoxin]. Its pathway is protein modification; protein lipoylation via endogenous pathway; protein N(6)-(lipoyl)lysine from octanoyl-[acyl-carrier-protein]: step 2/2. Functionally, catalyzes the radical-mediated insertion of two sulfur atoms into the C-6 and C-8 positions of the octanoyl moiety bound to the lipoyl domains of lipoate-dependent enzymes, thereby converting the octanoylated domains into lipoylated derivatives. This chain is Lipoyl synthase, found in Stutzerimonas stutzeri (strain A1501) (Pseudomonas stutzeri).